The primary structure comprises 250 residues: Adapter protein MecA (250 aa).

The protein belongs to the MecA family. As to quaternary structure, homodimer.

Enables the recognition and targeting of unfolded and aggregated proteins to the ClpC protease or to other proteins involved in proteolysis. The chain is Adapter protein MecA from Streptococcus sanguinis (strain SK36).